The sequence spans 425 residues: tRNA(Ile)-lysidine synthase (425 aa).

27-32 (SGGLDS) serves as a coordination point for ATP.

The protein belongs to the tRNA(Ile)-lysidine synthase family.

The protein localises to the cytoplasm. It carries out the reaction cytidine(34) in tRNA(Ile2) + L-lysine + ATP = lysidine(34) in tRNA(Ile2) + AMP + diphosphate + H(+). Functionally, ligates lysine onto the cytidine present at position 34 of the AUA codon-specific tRNA(Ile) that contains the anticodon CAU, in an ATP-dependent manner. Cytidine is converted to lysidine, thus changing the amino acid specificity of the tRNA from methionine to isoleucine. This is tRNA(Ile)-lysidine synthase from Streptococcus sanguinis (strain SK36).